The following is an 834-amino-acid chain: MGENDDGCSTQLIDGNGEFNVKGLDNFVKKTKLSDCGLSYAVVAIMGPQSSGKSTLLNHLFKTSFREMDAFAGRSQTTKGIWMARCVGIEPFTIAMDLEGTDGRERGEDDTTFEKQSALFAIAVADIVLINMWCHDIGREQAANKPLLKTVFQVMLRLFSPRKTTLLFVIRDKTKTPIELLERALREDIQKIWDSVRKPEAHKNTPLNEFFNVMIVALSSYEEKEKQFEQEVAELRQRFFHSISPGGLAGDRRGVVPASGFSFSSQQIWKVIKENRDLDLPAHKVMVATVRCEEIANEKLRDLATNESWLELHEAAEGGLVPGFGKKLSSILEKYFSEYDAEAIYFDEGVRKEKRLQLKLNALDFVYPSYATMLGHLRSNALESFKIRLEQSLNQGEGFAKAVRDSQQSCLMVFDKGCEDAAVKQATWDASKIREKLCRDIDAHTFFARSAKLSELTANYEKRLTQALSEPVESLFEAGGKETWPSIRKLLKRETETAVTDFLDVVTGFELDHAKIDAMVQNLKNYSQSLVEKKAREEAAKILIRMKDRFSTVFSHDKDSMPRVWTGKEDIRAITKDARAEALSLLSVMTAIRLDERPDNIESTLFSSLMDGTVSAASSHNRSVGTSTDPLASSSWEEVPPNNILLTPVQCKSLWRQFKSETEYTVTQAISAQEAHKRNNNWLPPAWAIVLMIVLGFNEFMMLLKNPLYLLGFFVAFLLSKALWVQLDIPREFQHGAVAGVLSITSKFLPTVMNLLRKLAEEAQGKTTQEVPDLSASQTYRQQSPSHSISSTISESVASNISSAGDDAEYSSPSPALVRRRNTNNVQESEISQM.

Topologically, residues 1–683 are cytoplasmic; it reads MGENDDGCST…EAHKRNNNWL (683 aa). The GB1/RHD3-type G domain occupies 37-252; sequence GLSYAVVAIM…ISPGGLAGDR (216 aa). 47–54 contacts GTP; that stretch reads GPQSSGKS. Positions 214–241 form a coiled coil; that stretch reads MIVALSSYEEKEKQFEQEVAELRQRFFH. The chain crosses the membrane as a helical span at residues 684 to 704; the sequence is PPAWAIVLMIVLGFNEFMMLL. At 705-707 the chain is on the lumenal side; it reads KNP. A helical membrane pass occupies residues 708 to 728; that stretch reads LYLLGFFVAFLLSKALWVQLD. Residues 729–834 are Cytoplasmic-facing; it reads IPREFQHGAV…NVQESEISQM (106 aa). The segment covering 767 to 783 has biased composition (polar residues); sequence TTQEVPDLSASQTYRQQ. The interval 767-834 is disordered; it reads TTQEVPDLSA…NVQESEISQM (68 aa). Residues 784–803 are compositionally biased toward low complexity; sequence SPSHSISSTISESVASNISS. The segment covering 823-834 has biased composition (polar residues); the sequence is TNNVQESEISQM.

This sequence belongs to the TRAFAC class dynamin-like GTPase superfamily. GB1/RHD3 GTPase family. RHD3 subfamily. Expressed in roots, leaves, stems and flowers.

The protein localises to the endoplasmic reticulum membrane. Functionally, probable GTP-binding protein that may be involved in cell development. This chain is Protein ROOT HAIR DEFECTIVE 3 homolog 2, found in Arabidopsis thaliana (Mouse-ear cress).